The primary structure comprises 43 residues: METATLVAISISCLLVSFTGYALYTAFGQPSEQLRDPFEEHED.

Residues 5 to 27 (TLVAISISCLLVSFTGYALYTAF) form a helical membrane-spanning segment.

The protein belongs to the PsbN family.

Its subcellular location is the plastid. The protein resides in the chloroplast thylakoid membrane. Functionally, may play a role in photosystem I and II biogenesis. This Cryptomeria japonica (Japanese cedar) protein is Protein PsbN.